The primary structure comprises 1424 residues: Serine/threonine-protein kinase LMTK3 (1424 aa).

A signal peptide spans 1 to 20 (MPAPGALILLAAVSASGCLA). A helical transmembrane segment spans residues 40-60 (AVVLISCSGLLAFIFLLLTCL). The disordered stretch occupies residues 74-95 (NPEGEDCSGEYTPPAEETSSSQ). The 279-residue stretch at 133 to 411 (LSYLQEIGSG…SDLQLQLTYL (279 aa)) folds into the Protein kinase domain. ATP-binding positions include 139 to 147 (IGSGWFGKV) and lysine 164. Serine 232 carries the phosphoserine modification. Aspartate 266 functions as the Proton acceptor in the catalytic mechanism. Disordered stretches follow at residues 413–465 (SERP…PDDV) and 486–516 (RGAG…PFYE). A compositionally biased stretch (pro residues) spans 418-439 (RPPPPPPPPRDGPFPWPWPPSH). Arginine 490 carries the omega-N-methylarginine modification. Residues 496–507 (PWQPASAPPAPH) are compositionally biased toward pro residues. Phosphoserine is present on residues serine 531 and serine 535. 5 disordered regions span residues 544–666 (EHGS…PLPC), 680–964 (LERG…MSPE), 976–1024 (MSPK…APET), 1041–1313 (GLEM…RKRK), and 1325–1424 (LFDQ…PVEN). Residues 571-584 (QTPSEVPQLVSETW) are compositionally biased toward polar residues. Residues 638-647 (AEEEEEESSP) show a composition bias toward acidic residues. Positions 700–713 (PPEDDSSLRAERGS) are enriched in basic and acidic residues. Over residues 744–758 (RGPPPAPPPPPPPPR) the composition is skewed to pro residues. Residues 759–791 (ASAEPAASPDPPSALASPGSGLSSPGPKPGDSG) are compositionally biased toward low complexity. The segment covering 818–841 (PRAPPEPPDPGAPRPPPDPGPLPL) has biased composition (pro residues). A compositionally biased stretch (basic and acidic residues) spans 935 to 954 (DMKEKVAENGLESPEKEERA). A phosphoserine mark is found at serine 947, serine 962, and serine 977. A compositionally biased stretch (basic and acidic residues) spans 994 to 1004 (RNTERPPEIGP). The span at 1084–1094 (GSGGRALGGVG) shows a compositional bias: gly residues. The segment covering 1095 to 1105 (TAPAGGPASAV) has biased composition (low complexity). Residues 1167-1177 (DPLKPERKGPE) are compositionally biased toward basic and acidic residues. Positions 1200–1213 (SRLSLALPPLTLTP) are enriched in low complexity. Residues 1231 to 1241 (AAGGEAGGAGA) are compositionally biased toward gly residues. Over residues 1245–1261 (AEEDGEDEDEDEEDEEA) the composition is skewed to acidic residues. Over residues 1262 to 1272 (AGSRDPGRTRE) the composition is skewed to basic and acidic residues. The segment covering 1329-1339 (ETPTNELSVQG) has biased composition (polar residues). The segment covering 1348 to 1360 (STPPAPPTPPHPT) has biased composition (pro residues).

This sequence belongs to the protein kinase superfamily. Tyr protein kinase family. Interacts with ESR1. Interacts with AP-2 complex subunit alpha. Mg(2+) is required as a cofactor. In terms of processing, autophosphorylated. In terms of tissue distribution, expressed in brain. Predominantly expressed in cerebral cortex, thalamus, the cerebellum and hippocampal formation (at protein level).

It localises to the membrane. The protein localises to the cell projection. The protein resides in the axon. Its subcellular location is the dendrite. It is found in the golgi apparatus membrane. It catalyses the reaction L-seryl-[protein] + ATP = O-phospho-L-seryl-[protein] + ADP + H(+). It carries out the reaction L-threonyl-[protein] + ATP = O-phospho-L-threonyl-[protein] + ADP + H(+). Protein kinase which phosphorylates ESR1 (in vitro) and protects it against proteasomal degradation. May also regulate ESR1 levels indirectly via a PKC-AKT-FOXO3 pathway where it decreases the activity of PKC and the phosphorylation of AKT, thereby increasing binding of transcriptional activator FOXO3 to the ESR1 promoter and increasing ESR1 transcription. Involved in endocytic trafficking of N-methyl-D-aspartate receptors (NMDAR) in neurons. This is Serine/threonine-protein kinase LMTK3 (Lmtk3) from Mus musculus (Mouse).